A 199-amino-acid chain; its full sequence is Pneumococcal vaccine antigen A homolog (199 aa).

It is found in the cell surface. The protein is Pneumococcal vaccine antigen A homolog (pvaA) of Streptococcus pyogenes serotype M1.